We begin with the raw amino-acid sequence, 282 residues long: Putative phosphoesterase 244L (282 aa).

The a divalent metal cation site is built by Asp45, Asn80, and His203.

This sequence belongs to the metallophosphoesterase superfamily. IIV-6 244L family.

This is Putative phosphoesterase 244L from Invertebrate iridescent virus 6 (IIV-6).